A 324-amino-acid chain; its full sequence is 4-hydroxy-3-methylbut-2-enyl diphosphate reductase (324 aa).

C13 lines the [4Fe-4S] cluster pocket. (2E)-4-hydroxy-3-methylbut-2-enyl diphosphate is bound by residues H41 and H75. Dimethylallyl diphosphate is bound by residues H41 and H75. Isopentenyl diphosphate contacts are provided by H41 and H75. C97 provides a ligand contact to [4Fe-4S] cluster. H125 contributes to the (2E)-4-hydroxy-3-methylbut-2-enyl diphosphate binding site. Dimethylallyl diphosphate is bound at residue H125. Residue H125 coordinates isopentenyl diphosphate. The active-site Proton donor is E127. T168 is a (2E)-4-hydroxy-3-methylbut-2-enyl diphosphate binding site. C225 lines the [4Fe-4S] cluster pocket. Residues S253, S254, N255, and S302 each coordinate (2E)-4-hydroxy-3-methylbut-2-enyl diphosphate. Positions 253, 254, 255, and 302 each coordinate dimethylallyl diphosphate. Isopentenyl diphosphate is bound by residues S253, S254, N255, and S302.

This sequence belongs to the IspH family. [4Fe-4S] cluster is required as a cofactor.

It catalyses the reaction isopentenyl diphosphate + 2 oxidized [2Fe-2S]-[ferredoxin] + H2O = (2E)-4-hydroxy-3-methylbut-2-enyl diphosphate + 2 reduced [2Fe-2S]-[ferredoxin] + 2 H(+). The enzyme catalyses dimethylallyl diphosphate + 2 oxidized [2Fe-2S]-[ferredoxin] + H2O = (2E)-4-hydroxy-3-methylbut-2-enyl diphosphate + 2 reduced [2Fe-2S]-[ferredoxin] + 2 H(+). It participates in isoprenoid biosynthesis; dimethylallyl diphosphate biosynthesis; dimethylallyl diphosphate from (2E)-4-hydroxy-3-methylbutenyl diphosphate: step 1/1. The protein operates within isoprenoid biosynthesis; isopentenyl diphosphate biosynthesis via DXP pathway; isopentenyl diphosphate from 1-deoxy-D-xylulose 5-phosphate: step 6/6. In terms of biological role, catalyzes the conversion of 1-hydroxy-2-methyl-2-(E)-butenyl 4-diphosphate (HMBPP) into a mixture of isopentenyl diphosphate (IPP) and dimethylallyl diphosphate (DMAPP). Acts in the terminal step of the DOXP/MEP pathway for isoprenoid precursor biosynthesis. The polypeptide is 4-hydroxy-3-methylbut-2-enyl diphosphate reductase (Chlorobium limicola (strain DSM 245 / NBRC 103803 / 6330)).